Here is a 508-residue protein sequence, read N- to C-terminus: Photosystem II CP47 reaction center protein (508 aa).

Helical transmembrane passes span 21 to 36, 101 to 115, 140 to 156, 203 to 218, 237 to 252, and 457 to 472; these read SVHI…WAGS, IVFS…IWHW, GIHL…FGAF, IAAG…FHLS, VLSS…AFVV, and SFAL…HGAR.

This sequence belongs to the PsbB/PsbC family. PsbB subfamily. In terms of assembly, PSII is composed of 1 copy each of membrane proteins PsbA, PsbB, PsbC, PsbD, PsbE, PsbF, PsbH, PsbI, PsbJ, PsbK, PsbL, PsbM, PsbT, PsbX, PsbY, PsbZ, Psb30/Ycf12, at least 3 peripheral proteins of the oxygen-evolving complex and a large number of cofactors. It forms dimeric complexes. Requires Binds multiple chlorophylls. PSII binds additional chlorophylls, carotenoids and specific lipids. as cofactor.

It localises to the plastid. Its subcellular location is the chloroplast thylakoid membrane. One of the components of the core complex of photosystem II (PSII). It binds chlorophyll and helps catalyze the primary light-induced photochemical processes of PSII. PSII is a light-driven water:plastoquinone oxidoreductase, using light energy to abstract electrons from H(2)O, generating O(2) and a proton gradient subsequently used for ATP formation. This is Photosystem II CP47 reaction center protein from Gossypium barbadense (Sea Island cotton).